Consider the following 131-residue polypeptide: Holo-[acyl-carrier-protein] synthase (131 aa).

Mg(2+) is bound by residues Asp-8 and Glu-59.

This sequence belongs to the P-Pant transferase superfamily. AcpS family. Mg(2+) serves as cofactor.

The protein resides in the cytoplasm. The enzyme catalyses apo-[ACP] + CoA = holo-[ACP] + adenosine 3',5'-bisphosphate + H(+). Transfers the 4'-phosphopantetheine moiety from coenzyme A to a Ser of acyl-carrier-protein. The chain is Holo-[acyl-carrier-protein] synthase from Rickettsia rickettsii (strain Sheila Smith).